A 522-amino-acid chain; its full sequence is Protein nucleotidyltransferase YdiU (522 aa).

ATP contacts are provided by G109, G111, R112, K132, D144, G145, R195, and R202. Residue D271 is the Proton acceptor of the active site. The Mg(2+) site is built by N272 and D281. D281 serves as a coordination point for ATP.

Belongs to the SELO family. It depends on Mg(2+) as a cofactor. Mn(2+) is required as a cofactor.

The enzyme catalyses L-seryl-[protein] + ATP = 3-O-(5'-adenylyl)-L-seryl-[protein] + diphosphate. The catalysed reaction is L-threonyl-[protein] + ATP = 3-O-(5'-adenylyl)-L-threonyl-[protein] + diphosphate. It catalyses the reaction L-tyrosyl-[protein] + ATP = O-(5'-adenylyl)-L-tyrosyl-[protein] + diphosphate. It carries out the reaction L-histidyl-[protein] + UTP = N(tele)-(5'-uridylyl)-L-histidyl-[protein] + diphosphate. The enzyme catalyses L-seryl-[protein] + UTP = O-(5'-uridylyl)-L-seryl-[protein] + diphosphate. The catalysed reaction is L-tyrosyl-[protein] + UTP = O-(5'-uridylyl)-L-tyrosyl-[protein] + diphosphate. Its function is as follows. Nucleotidyltransferase involved in the post-translational modification of proteins. It can catalyze the addition of adenosine monophosphate (AMP) or uridine monophosphate (UMP) to a protein, resulting in modifications known as AMPylation and UMPylation. The chain is Protein nucleotidyltransferase YdiU from Burkholderia ambifaria (strain MC40-6).